Here is a 412-residue protein sequence, read N- to C-terminus: Isocitrate dehydrogenase [NADP] (412 aa).

Thr100 provides a ligand contact to NADP(+). Residues Ser109, Asn111, Arg115, Arg125, and Arg149 each coordinate D-threo-isocitrate. Asp301 contacts Mg(2+). NADP(+) contacts are provided by residues 333–339, Asn346, Tyr385, and Arg389; that span reads HGSAPKY.

It belongs to the isocitrate and isopropylmalate dehydrogenases family. As to quaternary structure, homodimer. The cofactor is Mg(2+). Mn(2+) serves as cofactor.

The catalysed reaction is D-threo-isocitrate + NADP(+) = 2-oxoglutarate + CO2 + NADPH. In terms of biological role, catalyzes the oxidative decarboxylation of isocitrate to 2-oxoglutarate and carbon dioxide with the concomitant reduction of NADP(+). NAD(+) can replace NADP(+) with low efficiency. The polypeptide is Isocitrate dehydrogenase [NADP] (Archaeoglobus fulgidus (strain ATCC 49558 / DSM 4304 / JCM 9628 / NBRC 100126 / VC-16)).